The chain runs to 221 residues: HTH-type transcriptional regulator McbR (221 aa).

The HTH gntR-type domain occupies 10–77 (VSLTLQVEND…PAQAFTVPEV (68 aa)). The segment at residues 37–56 (TKNLAEQLGMSITPVREALL) is a DNA-binding region (H-T-H motif).

Important for biofilm formation. Represses expression of McbA by binding to its promoter region, which prevents colanic acid overproduction and mucoidy. The polypeptide is HTH-type transcriptional regulator McbR (mcbR) (Escherichia coli (strain K12)).